Reading from the N-terminus, the 402-residue chain is MENSSSETLHVEDLQTEIMSWLPLKSLLRFVIVSKKWASIIRGEQFKALYLRRSMTRPRLMFMVRRIATLPPEPEMVWFQSFCKEERCIPGQLEVEFLFHSVYQEKIPYFSSGQQQLRVPPNTNYTSVSQPIGGLICLQSETKFALCNPGTKKSRALPDIQAHEKAFITSFLGYDEATNVFKVLCLTMVWAHEPSKRVYEYQVLTVESGVESCSWRGITCKEKDHTPETQGLCKGGVLYYGARSTSDHRPLVMSFNVRSQEFTAIELPDQLHISYFWNFVIYNGDIALVNESDFDPRVVNEPNGNKVFHIWVRDATAQEWQRTRIEIPRWEQNVGHVDYVFRGTTGTKELVFAQDSRHCEDDFFVLYYDTFTKDLRRFQIGVTGPKISVRTCLDHVDSLWLM.

One can recognise an F-box domain in the interval 4 to 52 (SSSETLHVEDLQTEIMSWLPLKSLLRFVIVSKKWASIIRGEQFKALYLR).

The protein is Putative F-box protein At1g70970 of Arabidopsis thaliana (Mouse-ear cress).